The following is a 518-amino-acid chain: G-protein coupled receptor 161 (518 aa).

At 1-26 the chain is on the extracellular side; the sequence is MNSSSDGANEGAGAAADNGPTKVAES. The N-linked (GlcNAc...) asparagine glycan is linked to Asn-2. A helical transmembrane segment spans residues 27-47; the sequence is IAIIIIDILICLGNLVIVVTL. Residues 48 to 59 are Cytoplasmic-facing; the sequence is YKKSYLLSLSNK. A helical membrane pass occupies residues 60 to 80; the sequence is FVFSLTFSNLLLSMLVLPFVV. The Extracellular portion of the chain corresponds to 81 to 97; it reads VSSILREWIFGVVWCNF. Cys-95 and Cys-173 are joined by a disulfide. The N-linked (GlcNAc...) asparagine glycan is linked to Asn-96. Residues 98–118 form a helical membrane-spanning segment; the sequence is SALLYMLISSASMLTLGIIAI. Residues 119-138 lie on the Cytoplasmic side of the membrane; sequence DRYYAVLYPMVYPMKITGNR. A helical transmembrane segment spans residues 139–159; that stretch reads AVLALVYVWLHSLIGCLPPLF. At 160-185 the chain is on the extracellular side; that stretch reads GWSTLEFDHFKWMCVAAWHKEAGYTA. The chain crosses the membrane as a helical span at residues 186-206; that stretch reads FWQVWCALLPFIVMMICYGFI. Residues 207-264 are Cytoplasmic-facing; that stretch reads FRVARIKARKIHCGTVIIVQEASQKNGRKNSSTSTSSSGSRKNGFSSIVYSANQCKAL. A helical transmembrane segment spans residues 265 to 285; the sequence is ITILVVIGAFVLTWGPYMIVI. Residues 286–301 lie on the Extracellular side of the membrane; it reads STEALKGKNSVSPVLE. Residues 302 to 322 form a helical membrane-spanning segment; that stretch reads TLATWLSFTSAICHPLIYGLW. Over 323–518 the chain is Cytoplasmic; that stretch reads NKTVRKELLG…GNIETSKCDV (196 aa). Residues 429-448 form a disordered region; that stretch reads EVEQKNDARTMPTQPTAPSE. The segment covering 439 to 448 has biased composition (polar residues); the sequence is MPTQPTAPSE.

This sequence belongs to the G-protein coupled receptor 1 family.

The protein resides in the cell projection. It localises to the cilium membrane. Its subcellular location is the cell membrane. Key negative regulator of Shh signaling during neural tube development. Recruited to primary cilia and acts as a regulator of the PKA-dependent basal repression machinery in Shh signaling by increasing cAMP levels, leading to promote the PKA-dependent processing of gli3 into gli3r and repress the Shh signaling. In presence of shh, it is removed from primary cilia, preventing its activity and allowing activation of the Shh signaling. The protein is G-protein coupled receptor 161 (gpr161) of Xenopus tropicalis (Western clawed frog).